The following is a 433-amino-acid chain: Glutamyl-tRNA reductase (433 aa).

Residues 49-52 (TCNR), S109, 114-116 (EGQ), and Q120 contribute to the substrate site. C50 serves as the catalytic Nucleophile. An NADP(+)-binding site is contributed by 198 to 203 (GAGRMS).

Belongs to the glutamyl-tRNA reductase family. In terms of assembly, homodimer.

It catalyses the reaction (S)-4-amino-5-oxopentanoate + tRNA(Glu) + NADP(+) = L-glutamyl-tRNA(Glu) + NADPH + H(+). The protein operates within porphyrin-containing compound metabolism; protoporphyrin-IX biosynthesis; 5-aminolevulinate from L-glutamyl-tRNA(Glu): step 1/2. It participates in porphyrin-containing compound metabolism; chlorophyll biosynthesis. Catalyzes the NADPH-dependent reduction of glutamyl-tRNA(Glu) to glutamate 1-semialdehyde (GSA). The polypeptide is Glutamyl-tRNA reductase (Prochlorococcus marinus subsp. pastoris (strain CCMP1986 / NIES-2087 / MED4)).